The sequence spans 182 residues: Lipoprotein signal peptidase (182 aa).

3 helical membrane passes run 12–32, 68–88, and 91–111; these read VAVF…TKAW, ATWV…VAGV, and ISMK…GNLI. Residues aspartate 127 and aspartate 140 contribute to the active site. Residues 135-155 form a helical membrane-spanning segment; the sequence is VGNVADIYLVVAGVVLVILIL.

It belongs to the peptidase A8 family.

The protein resides in the cell membrane. The enzyme catalyses Release of signal peptides from bacterial membrane prolipoproteins. Hydrolyzes -Xaa-Yaa-Zaa-|-(S,diacylglyceryl)Cys-, in which Xaa is hydrophobic (preferably Leu), and Yaa (Ala or Ser) and Zaa (Gly or Ala) have small, neutral side chains.. The protein operates within protein modification; lipoprotein biosynthesis (signal peptide cleavage). In terms of biological role, this protein specifically catalyzes the removal of signal peptides from prolipoproteins. This chain is Lipoprotein signal peptidase, found in Bifidobacterium longum subsp. infantis (strain ATCC 15697 / DSM 20088 / JCM 1222 / NCTC 11817 / S12).